Reading from the N-terminus, the 613-residue chain is MNTNIFSTHLEFSKGVASVFKVIDTIHNISKNNNFNNILTQDFIIDTILSILWEDPNENEIFSSMIEDGETITNKNLSAQTKEGLLLNSNSFGLKFKYYNNAFRSWIDNYNPTSIDDVVYRFKDVNSICENNINEFKVKNYEVTVLPIYMQIANLHLLLLRDGMIYGDAWNLYRELGFSDQDSFYNHVLDKTKFYINDCLNYYNTGLSNLKLDPNNSWIDITRYCRFMTFYILDMISICPIYDTKVYDKPINMQTLTRKVYSDPVNFIDENIPISEYEKMYNISPELFSTLFSISFYTNKSGNKFLNGHVNRHVGTDLNYNGLRETHYGNYGSNYEVESMAFDDIKAYSNNYFNNTQNNNPTSVKSIKFLITKNNDEWIYGEPDSSNIDFTRNIQGYLSNLNNESYTHSLSDMILANNDKIQINIDTPHSYSYSWIYKGIEDTNYISDKLINQIPLVKEVKLKSRHYSEISVIKGPGFTGGDLILSKVHKPANQIPAQYMKNKITIPIKTKFPAGSQDFKVRLCYASNHDIGLIRLIAGSKYITTNIQQTFNTTENNPSLIYDDFKYFNFNETLSITSSGIDELYLEFYYSYTDGNFEDFPKLSIPYTRNYSC.

It belongs to the delta endotoxin family.

The protein resides in the secreted. Functionally, toxin active on mosquito larvae of the species Aedes aegypti, Culex pipiens and Anopheles stephensi. This Paraclostridium bifermentans (Clostridium bifermentans) protein is Pesticidal crystal-like protein Cry16Aa (cry16Aa).